Here is a 119-residue protein sequence, read N- to C-terminus: Large ribosomal subunit protein bL20 (119 aa).

The protein belongs to the bacterial ribosomal protein bL20 family.

Binds directly to 23S ribosomal RNA and is necessary for the in vitro assembly process of the 50S ribosomal subunit. It is not involved in the protein synthesizing functions of that subunit. The sequence is that of Large ribosomal subunit protein bL20 from Buchnera aphidicola subsp. Cinara cedri (strain Cc).